The following is a 118-amino-acid chain: UPF0102 protein RHA1_ro06551 (118 aa).

This sequence belongs to the UPF0102 family.

In Rhodococcus jostii (strain RHA1), this protein is UPF0102 protein RHA1_ro06551.